The primary structure comprises 236 residues: tRNA1(Val) (adenine(37)-N6)-methyltransferase (236 aa).

Belongs to the methyltransferase superfamily. tRNA (adenine-N(6)-)-methyltransferase family.

The protein resides in the cytoplasm. It carries out the reaction adenosine(37) in tRNA1(Val) + S-adenosyl-L-methionine = N(6)-methyladenosine(37) in tRNA1(Val) + S-adenosyl-L-homocysteine + H(+). In terms of biological role, specifically methylates the adenine in position 37 of tRNA(1)(Val) (anticodon cmo5UAC). In Actinobacillus pleuropneumoniae serotype 5b (strain L20), this protein is tRNA1(Val) (adenine(37)-N6)-methyltransferase.